The primary structure comprises 274 residues: Putative pyruvate, phosphate dikinase regulatory protein 1 (274 aa).

149 to 156 (GISRTSKT) serves as a coordination point for ADP.

It belongs to the pyruvate, phosphate/water dikinase regulatory protein family. PDRP subfamily.

The enzyme catalyses N(tele)-phospho-L-histidyl/L-threonyl-[pyruvate, phosphate dikinase] + ADP = N(tele)-phospho-L-histidyl/O-phospho-L-threonyl-[pyruvate, phosphate dikinase] + AMP + H(+). It catalyses the reaction N(tele)-phospho-L-histidyl/O-phospho-L-threonyl-[pyruvate, phosphate dikinase] + phosphate + H(+) = N(tele)-phospho-L-histidyl/L-threonyl-[pyruvate, phosphate dikinase] + diphosphate. Bifunctional serine/threonine kinase and phosphorylase involved in the regulation of the pyruvate, phosphate dikinase (PPDK) by catalyzing its phosphorylation/dephosphorylation. This is Putative pyruvate, phosphate dikinase regulatory protein 1 from Listeria monocytogenes serotype 4b (strain F2365).